The chain runs to 99 residues: Large ribosomal subunit protein uL23 (99 aa).

It belongs to the universal ribosomal protein uL23 family. In terms of assembly, part of the 50S ribosomal subunit. Contacts protein L29, and trigger factor when it is bound to the ribosome.

Functionally, one of the early assembly proteins it binds 23S rRNA. One of the proteins that surrounds the polypeptide exit tunnel on the outside of the ribosome. Forms the main docking site for trigger factor binding to the ribosome. The protein is Large ribosomal subunit protein uL23 of Stutzerimonas stutzeri (strain A1501) (Pseudomonas stutzeri).